A 448-amino-acid polypeptide reads, in one-letter code: Phosphoglucosamine mutase (448 aa).

The active-site Phosphoserine intermediate is serine 100. Residues serine 100, aspartate 240, aspartate 242, and aspartate 244 each contribute to the Mg(2+) site. A Phosphoserine modification is found at serine 100.

Belongs to the phosphohexose mutase family. Mg(2+) serves as cofactor. In terms of processing, activated by phosphorylation.

It catalyses the reaction alpha-D-glucosamine 1-phosphate = D-glucosamine 6-phosphate. In terms of biological role, catalyzes the conversion of glucosamine-6-phosphate to glucosamine-1-phosphate. The protein is Phosphoglucosamine mutase of Bacillus cereus (strain ATCC 10987 / NRS 248).